The following is a 373-amino-acid chain: tRNA-specific 2-thiouridylase MnmA (373 aa).

ATP contacts are provided by residues 12 to 19 and Met-38; that span reads GMSGGVDS. Positions 98 to 100 are interaction with target base in tRNA; sequence NPD. Cys-103 (nucleophile) is an active-site residue. Cys-103 and Cys-200 form a disulfide bridge. Gly-127 is a binding site for ATP. Residues 150-152 form an interaction with tRNA region; sequence KDQ. Residue Cys-200 is the Cysteine persulfide intermediate of the active site. The interval 312–313 is interaction with tRNA; that stretch reads RY.

The protein belongs to the MnmA/TRMU family.

It is found in the cytoplasm. It catalyses the reaction S-sulfanyl-L-cysteinyl-[protein] + uridine(34) in tRNA + AH2 + ATP = 2-thiouridine(34) in tRNA + L-cysteinyl-[protein] + A + AMP + diphosphate + H(+). In terms of biological role, catalyzes the 2-thiolation of uridine at the wobble position (U34) of tRNA, leading to the formation of s(2)U34. The chain is tRNA-specific 2-thiouridylase MnmA from Streptococcus pneumoniae (strain ATCC 700669 / Spain 23F-1).